The sequence spans 67 residues: Penaeidin-4d (67 aa).

Positions 1–19 (MRLLVCLVFLASFAMVCQG) are cleaved as a signal peptide. 3 disulfides stabilise this stretch: C42-C56, C45-C63, and C57-C64. L66 is subject to Leucine amide.

It belongs to the penaeidin family.

Its subcellular location is the cytoplasmic granule. Functionally, antibacterial and antifungal activity. Presents chitin-binding activity. This Penaeus setiferus (Atlantic white shrimp) protein is Penaeidin-4d.